Reading from the N-terminus, the 430-residue chain is Lipoyl synthase, mitochondrial (430 aa).

The N-terminal 37 residues, 1-37 (MATSAGKLRTLYSAHSSLSSLPPSARPTLQLATLRSY), are a transit peptide targeting the mitochondrion. A compositionally biased stretch (polar residues) spans 39-55 (TTTPHDSPIGNTSNTPP). The segment at 39–58 (TTTPHDSPIGNTSNTPPTVK) is disordered. Residues Cys141, Cys146, Cys152, Cys172, Cys176, Cys179, and Ser387 each contribute to the [4Fe-4S] cluster site. The Radical SAM core domain occupies 155 to 376 (GSSKSAATAT…KERALEMGFL (222 aa)).

Belongs to the radical SAM superfamily. Lipoyl synthase family. It depends on [4Fe-4S] cluster as a cofactor.

It is found in the mitochondrion. It catalyses the reaction [[Fe-S] cluster scaffold protein carrying a second [4Fe-4S](2+) cluster] + N(6)-octanoyl-L-lysyl-[protein] + 2 oxidized [2Fe-2S]-[ferredoxin] + 2 S-adenosyl-L-methionine + 4 H(+) = [[Fe-S] cluster scaffold protein] + N(6)-[(R)-dihydrolipoyl]-L-lysyl-[protein] + 4 Fe(3+) + 2 hydrogen sulfide + 2 5'-deoxyadenosine + 2 L-methionine + 2 reduced [2Fe-2S]-[ferredoxin]. Its pathway is protein modification; protein lipoylation via endogenous pathway; protein N(6)-(lipoyl)lysine from octanoyl-[acyl-carrier-protein]: step 2/2. Its function is as follows. Catalyzes the radical-mediated insertion of two sulfur atoms into the C-6 and C-8 positions of the octanoyl moiety bound to the lipoyl domains of lipoate-dependent enzymes, thereby converting the octanoylated domains into lipoylated derivatives. This chain is Lipoyl synthase, mitochondrial, found in Ajellomyces capsulatus (strain G186AR / H82 / ATCC MYA-2454 / RMSCC 2432) (Darling's disease fungus).